The chain runs to 252 residues: Triosephosphate isomerase (252 aa).

A substrate-binding site is contributed by 9–11 (NWK). H95 functions as the Electrophile in the catalytic mechanism. The active-site Proton acceptor is E167. Residues G173, S213, and 234-235 (GG) contribute to the substrate site. S213 bears the Phosphoserine mark.

It belongs to the triosephosphate isomerase family. Homodimer.

The protein localises to the cytoplasm. The enzyme catalyses D-glyceraldehyde 3-phosphate = dihydroxyacetone phosphate. It participates in carbohydrate biosynthesis; gluconeogenesis. Its pathway is carbohydrate degradation; glycolysis; D-glyceraldehyde 3-phosphate from glycerone phosphate: step 1/1. Its function is as follows. Involved in the gluconeogenesis. Catalyzes stereospecifically the conversion of dihydroxyacetone phosphate (DHAP) to D-glyceraldehyde-3-phosphate (G3P). The protein is Triosephosphate isomerase of Oceanobacillus iheyensis (strain DSM 14371 / CIP 107618 / JCM 11309 / KCTC 3954 / HTE831).